The sequence spans 412 residues: Alpha-1-antitrypsin 1-3 (412 aa).

The signal sequence occupies residues 1–24 (MTPSISWGLLLLAGLCCLVPSFLA). Asn64, Asn101, and Asn265 each carry an N-linked (GlcNAc...) asparagine glycan. An RCL region spans residues 368–387 (AVTVLLAVPYSMPPILRFDH).

It belongs to the serpin family.

The protein localises to the secreted. Its function is as follows. Inhibitor of serine proteases. Can inhibit trypsin and chymotrypsin; relatively ineffective against elastase. This Mus musculus (Mouse) protein is Alpha-1-antitrypsin 1-3 (Serpina1c).